The following is a 524-amino-acid chain: MQTTANHSSRSTQTGTRAHGAALAETTSREDFRALATEHRVVPVIRKVLADSETPLSAYRKLAANRPGTFLLESAENGRSWSRWSFIGAGAPSALTVRDNAAAWLGTAPEGAPSGGDPLDALRATLDLLKTEAMAGLPPLSSGLVGFFAYDMVRRLERLPELAVDDLGLPDMLLLLATDIAAVDHHEGTITLIANAVNWNGTDERVDWAYDDAVARLDVMTKALGQPLTSAVATFSRPAPDHRAQRTMEEYTEIVDKLVGDIEAGEAFQVVPSQRFEMDTAADPLDVYRILRVTNPSPYMYLLNIPDADGGLDFSIVGSSPEALVTVKDGRATTHPIAGTRWRGATEEEDVLLEKELLADEKERAEHLMLVDLGRNDLGRVCRPGTVRVDDYSHIERYSHVMHLVSTVTGELAEDKTALDAVTACFPAGTLSGAPKVRAMELIEEVEKTRRGLYGGVVGYLDFAGNADFAIAIRTALMRNGTAYVQAGGGVVADSNGPYEYTEAANKARAVLNAIAAAATLAEP.

The segment covering 1–16 (MQTTANHSSRSTQTGT) has biased composition (polar residues). Residues 1–25 (MQTTANHSSRSTQTGTRAHGAALAE) form a disordered region. L-tryptophan-binding positions include S74 and 298 to 300 (PYM). Residue 339-340 (GT) participates in chorismate binding. Residue K355 forms an Isoglutamyl lysine isopeptide (Lys-Gln) (interchain with Q-Cter in protein Pup) linkage. E366 is a Mg(2+) binding site. Chorismate is bound by residues Y454, R474, 488–490 (GGG), and G490. Residue E503 participates in Mg(2+) binding.

The protein belongs to the anthranilate synthase component I family. In terms of assembly, heterotetramer consisting of two non-identical subunits: a beta subunit (TrpG) and a large alpha subunit (TrpE). Mg(2+) is required as a cofactor.

It carries out the reaction chorismate + L-glutamine = anthranilate + pyruvate + L-glutamate + H(+). It participates in amino-acid biosynthesis; L-tryptophan biosynthesis; L-tryptophan from chorismate: step 1/5. Its activity is regulated as follows. Feedback inhibited by tryptophan. Its function is as follows. Part of a heterotetrameric complex that catalyzes the two-step biosynthesis of anthranilate, an intermediate in the biosynthesis of L-tryptophan. In the first step, the glutamine-binding beta subunit (TrpG) of anthranilate synthase (AS) provides the glutamine amidotransferase activity which generates ammonia as a substrate that, along with chorismate, is used in the second step, catalyzed by the large alpha subunit of AS (TrpE) to produce anthranilate. In the absence of TrpG, TrpE can synthesize anthranilate directly from chorismate and high concentrations of ammonia. This is Anthranilate synthase component 1 (trpE) from Mycolicibacterium smegmatis (strain ATCC 700084 / mc(2)155) (Mycobacterium smegmatis).